The chain runs to 791 residues: Disintegrin and metalloproteinase domain-containing protein 1a (791 aa).

The N-terminal stretch at 1–65 (MSVAAAGRGF…LLIFLPSTFC (65 aa)) is a signal peptide. Residue Asn-72 is glycosylated (N-linked (GlcNAc...) asparagine). The segment at 201–220 (CSVTPKDSPGDTSHPPRSRK) is disordered. Residues 235 to 429 (KYVEMFVVVN…HRGACLLDEP (195 aa)) form the Peptidase M12B domain. A glycan (N-linked (GlcNAc...) asparagine) is linked at Asn-256. 3 disulfides stabilise this stretch: Cys-345/Cys-424, Cys-385/Cys-408, and Cys-387/Cys-393. Zn(2+) is bound at residue His-370. Glu-371 is an active-site residue. The Zn(2+) site is built by His-374 and His-380. Residues Asn-407 and Asn-484 are each glycosylated (N-linked (GlcNAc...) asparagine). Residues 438-522 (AANCGNGVVE…ECPANSYMQD (85 aa)) enclose the Disintegrin domain. Residues Cys-494 and Cys-514 are joined by a disulfide bond. An N-linked (GlcNAc...) asparagine glycan is attached at Asn-630. In terms of domain architecture, EGF-like spans 663 to 697 (LQYNCEPQEMCHGNGVCNNFKHCHCDAGFAPPDCS). Intrachain disulfides connect Cys-667-Cys-679, Cys-673-Cys-685, and Cys-687-Cys-696. Residues 741–761 (VMVLVVPIFLVVLLCCLMLIA) form a helical membrane-spanning segment. At 762–791 (YLWSEVQEVVSPPSSSESSSSSSWSDSDSQ) the chain is on the cytoplasmic side. The segment at 772 to 791 (SPPSSSESSSSSSWSDSDSQ) is disordered.

As to quaternary structure, heterodimer with ADAM2/fertilin subunit beta. In terms of tissue distribution, testis.

It is found in the membrane. May be involved in sperm-egg fusion. The sequence is that of Disintegrin and metalloproteinase domain-containing protein 1a (Adam1a) from Mus musculus (Mouse).